We begin with the raw amino-acid sequence, 173 residues long: NADH-ubiquinone oxidoreductase chain 6 (173 aa).

Helical transmembrane passes span 1–21 (MTYLVLLLGLCFVLGGLAVAS), 27–47 (YGVVGLVLASVAGCGWLLSLG), 48–68 (VSFVSLVLFMVYLGGMLVVFV), 88–108 (VGYGASFILVVIAGMIVGGLI), and 139–159 (YGVGMFLVAGWGLLLTLFVVL).

Belongs to the complex I subunit 6 family.

The protein localises to the mitochondrion membrane. The catalysed reaction is a ubiquinone + NADH + 5 H(+)(in) = a ubiquinol + NAD(+) + 4 H(+)(out). In terms of biological role, core subunit of the mitochondrial membrane respiratory chain NADH dehydrogenase (Complex I) that is believed to belong to the minimal assembly required for catalysis. Complex I functions in the transfer of electrons from NADH to the respiratory chain. The immediate electron acceptor for the enzyme is believed to be ubiquinone. The chain is NADH-ubiquinone oxidoreductase chain 6 (MT-ND6) from Calidris maritima (Purple sandpiper).